The sequence spans 341 residues: Protein quaking-A (341 aa).

The KH domain maps to F87–V153. Residues P276–P279 carry the SH3-binding motif. Residues R324–R330 carry the Nuclear localization signal motif.

The protein belongs to the quaking family. As to quaternary structure, homodimer; does not require RNA to homodimerize.

It localises to the cytoplasm. It is found in the nucleus. Its function is as follows. RNA reader protein, which recognizes and binds specific RNAs, thereby regulating RNA metabolic processes, such as pre-mRNA splicing, circular RNA (circRNA) formation, mRNA export, mRNA stability and/or translation. Involved in various cellular processes, such as mRNA storage into stress granules, apoptosis, interferon response, glial cell fate and development. Binds to the 5'-NACUAAY-N(1,20)-UAAY-3' RNA core sequence. Acts as a mRNA modification reader that specifically recognizes and binds mRNA transcripts modified by internal N(7)-methylguanine (m7G). Promotes the formation of circular RNAs (circRNAs): acts by binding to sites flanking circRNA-forming exons. CircRNAs are produced by back-splicing circularization of pre-mRNAs. Required to protect and promote stability of mRNAs which promotes oligodendrocyte differentiation. Acts as an important regulator of muscle development: required during early skeletal myofibril formation by regulating the accumulation of the muscle-specific tropomyosin-3 (tpm3) transcripts. The sequence is that of Protein quaking-A from Danio rerio (Zebrafish).